The primary structure comprises 428 residues: Serine--tRNA ligase (428 aa).

235-237 provides a ligand contact to L-serine; that stretch reads TAE. 266-268 serves as a coordination point for ATP; that stretch reads RSE. E289 provides a ligand contact to L-serine. 353-356 contributes to the ATP binding site; the sequence is EISS. S389 serves as a coordination point for L-serine.

It belongs to the class-II aminoacyl-tRNA synthetase family. Type-1 seryl-tRNA synthetase subfamily. Homodimer. The tRNA molecule binds across the dimer.

It is found in the cytoplasm. The enzyme catalyses tRNA(Ser) + L-serine + ATP = L-seryl-tRNA(Ser) + AMP + diphosphate + H(+). The catalysed reaction is tRNA(Sec) + L-serine + ATP = L-seryl-tRNA(Sec) + AMP + diphosphate + H(+). It functions in the pathway aminoacyl-tRNA biosynthesis; selenocysteinyl-tRNA(Sec) biosynthesis; L-seryl-tRNA(Sec) from L-serine and tRNA(Sec): step 1/1. Functionally, catalyzes the attachment of serine to tRNA(Ser). Is also able to aminoacylate tRNA(Sec) with serine, to form the misacylated tRNA L-seryl-tRNA(Sec), which will be further converted into selenocysteinyl-tRNA(Sec). This chain is Serine--tRNA ligase, found in Shewanella baltica (strain OS155 / ATCC BAA-1091).